The sequence spans 510 residues: MPNRCDFCTSSSTKDKQQWTQCDGCDRWVHDVCVSITDPVSYAKYHCPTCTKTKGPSLYKRQSKRKKIDIDYAAMHSGNVDMSLRTRHVHSSRFTDVAASAQNKEPFKRVSGTELTLDWAQSSDGLNEPVIVPKEYKDTLGMYIPEDLTVRQVAEAVGMESPVEVINVVSQNGSPGWNMGKWTEYYEDIEGRDTILNVISLEISASALGKTIVRPTLVRELDLVDRVWPTNTDAARESKPRVSLYALMSVEDSFTDFHIDFAGSSVFYHVLKGRKSFMFIRPTARNLAAYSQWCLSADQNVVFLPDVLSPDSDIYTVHLSPGDTMYIPSGWIHAVHSPQDSLVVGGNFITPLNMKTQIDIAGIEVRTKVPMKFRYPLFAGVMWYYVLQLLANPERLNTMSTKERDGLNSVAEYLSGFIKTMSPTMKDVQYRRFVANFPMEIRPFPGKTLLDYCAMLDFYPKGVQETVDIDIRKKKGESKEKHKIESQLPEEKILQGSKLESKEEVQTENF.

The PHD-type zinc finger occupies 2–53; sequence PNRCDFCTSSSTKDKQQWTQCDGCDRWVHDVCVSITDPVSYAKYHCPTCTKT. In terms of domain architecture, JmjC spans 216–365; sequence TLVRELDLVD…TQIDIAGIEV (150 aa). Thr255 is a substrate binding site. 2 residues coordinate Fe cation: His258 and Asp260. Lys275 is a substrate binding site. His333 contributes to the Fe cation binding site. The interval 475-510 is disordered; the sequence is KGESKEKHKIESQLPEEKILQGSKLESKEEVQTENF. Positions 477–510 are enriched in basic and acidic residues; sequence ESKEKHKIESQLPEEKILQGSKLESKEEVQTENF.

This sequence belongs to the JHDM1 histone demethylase family. The cofactor is Fe(2+).

The protein localises to the nucleus. The enzyme catalyses N(6),N(6)-dimethyl-L-lysyl(36)-[histone H3] + 2 2-oxoglutarate + 2 O2 = L-lysyl(36)-[histone H3] + 2 formaldehyde + 2 succinate + 2 CO2. Functionally, histone demethylase that specifically demethylates 'Lys-36' of histone H3, thereby playing a central role in histone code. The chain is JmjC domain-containing histone demethylation protein 1 (JHD1) from Yarrowia lipolytica (strain CLIB 122 / E 150) (Yeast).